Here is a 121-residue protein sequence, read N- to C-terminus: Insulin-like peptide 01 (121 aa).

A signal peptide spans 1–24; it reads MDSFTRASLITFLILLTLTSLVFS. Positions 25–45 are excised as a propeptide; that stretch reads NGCMMRGGCFKTSEDAHRLIM. Cystine bridges form between cysteine 52–cysteine 107, cysteine 64–cysteine 120, and cysteine 106–cysteine 111. A propeptide spans 69–97 (c peptide); the sequence is RRRKRDLRRKLGIVMDRKESHKFLRRRKR.

It belongs to the insulin family.

The protein localises to the secreted. Its function is as follows. Insulin decreases blood glucose concentration. May have evolved to activate insulin receptors (INSR) in vertebrates. Molecular docking studies reveals unique interaction with the human insulin receptor. In vivo, insulin-like peptide injection reduces blood glucose levels in two models of zebrafish diabetes (streptozotocin- and glucose-induced). Also shorter swimming distance of zebrafish larvae, an effect which is not observed with human insulin. The polypeptide is Insulin-like peptide 01 (Exaiptasia diaphana (Tropical sea anemone)).